A 179-amino-acid polypeptide reads, in one-letter code: Shikimate kinase (179 aa).

15-20 provides a ligand contact to ATP; that stretch reads GAGKTS. A Mg(2+)-binding site is contributed by Thr19. Substrate is bound by residues Asp37, Arg61, and Gly83. Arg122 provides a ligand contact to ATP. Arg142 serves as a coordination point for substrate.

It belongs to the shikimate kinase family. In terms of assembly, monomer. The cofactor is Mg(2+).

It is found in the cytoplasm. It carries out the reaction shikimate + ATP = 3-phosphoshikimate + ADP + H(+). It participates in metabolic intermediate biosynthesis; chorismate biosynthesis; chorismate from D-erythrose 4-phosphate and phosphoenolpyruvate: step 5/7. Its function is as follows. Catalyzes the specific phosphorylation of the 3-hydroxyl group of shikimic acid using ATP as a cosubstrate. In Coxiella burnetii (strain RSA 331 / Henzerling II), this protein is Shikimate kinase.